We begin with the raw amino-acid sequence, 659 residues long: Cytochrome bo(3) ubiquinol oxidase subunit 1 (659 aa).

Over 1–14 (MFGKLSLNSIPYHD) the chain is Extracellular. A helical membrane pass occupies residues 15-35 (PIIMITCCVVILVFLVISIII). Over 36–56 (TIAQKWQYLWNEWCCTVDHKK) the chain is Cytoplasmic. Residues 57–77 (IAKMYIFLAFIMLFRGFADAI) traverse the membrane as a helical segment. Residues R71, D75, and H101 each contribute to the a ubiquinone site. Residues 78–109 (MMRMQQFLVSSYHGNGTGFLPPHHYDQIFTAH) are Extracellular-facing. H109 serves as a coordination point for heme b. The helical transmembrane segment at 110 to 130 (GVIMIFFVAMPLVIGLMNFVV) threads the bilayer. Residues 131–148 (PLQIGSRDVAFPFLNNLS) are Cytoplasmic-facing. The chain crosses the membrane as a helical span at residues 149 to 169 (LWLTIFSALLMNVSLGIGEFA). Residues 170 to 192 (QTGWLAYPPLSELQYSPGVGVDY) are Extracellular-facing. W173 is a heme b binding site. The helical transmembrane segment at 193-213 (WIWSLQISGIGTTLTAINFLV) threads the bilayer. Residues 214 to 235 (TIIKMRSSGMNWFKIPVFTWTS) are Cytoplasmic-facing. The chain crosses the membrane as a helical span at residues 236–256 (FCTNILIIASFPVLTVSLLLL). Residues 257–280 (TLDRYLGFHFFTNDFGGNMMMYVN) lie on the Extracellular side of the membrane. The helical transmembrane segment at 281–301 (LIWIWGHPEVYILILPVFGIF) threads the bilayer. Residue H287 coordinates Cu(2+). Residues 287-291 (HPEVY) constitute a cross-link (1'-histidyl-3'-tyrosine (His-Tyr)). Fe(II)-heme o is bound at residue Y291. Topologically, residues 302-318 (SEVVATFSSKELFGYTS) are cytoplasmic. The helical transmembrane segment at 319–339 (LIWATIVITILSFIVWLHHFF) threads the bilayer. Residues H336 and H337 each contribute to the Cu(2+) site. The Extracellular segment spans residues 340 to 350 (TMGASANVNAF). Residues 351–371 (FGITTMIISIPTGVKIFNWLF) form a helical membrane-spanning segment. Residues 372-382 (TMYRGNVRINS) lie on the Cytoplasmic side of the membrane. A helical transmembrane segment spans residues 383 to 403 (IMLWTIGFLITFSIGGMAGVL). At 404–416 (LSLPVIDFSLHNS) the chain is on the extracellular side. Residues H414 and H422 each contribute to the Fe(II)-heme o site. The chain crosses the membrane as a helical span at residues 417-437 (LFLVAHFHNVIIGGVVFGCFA). A heme b-binding site is contributed by H424. Residues 438 to 459 (GITYWFPKLFGFMLSEKWGKRA) are Cytoplasmic-facing. Residues 460-480 (FWCWFFGFFCAFMPLYALGLM) traverse the membrane as a helical segment. Residues 481 to 499 (GMTRRLSQNINPQFHSMLT) lie on the Extracellular side of the membrane. The heme b site is built by R484 and R485. Residues 500–520 (IAALGTILIFIGIVFQIIQIF) traverse the membrane as a helical segment. At 521-587 (VSIRDRNLNR…KLPILYTSFH (67 aa)) the chain is on the cytoplasmic side. The helical transmembrane segment at 588–608 (MPKNTKFGFLIGFFAFLLGFS) threads the bilayer. A topological domain (extracellular) is located at residue A609. Residues 610-630 (VWYIFWLFFISFFVIIYLLVI) traverse the membrane as a helical segment. The Cytoplasmic segment spans residues 631–659 (KSLDTNCDYIISIEEIKEIEKCINIKKMD).

This sequence belongs to the heme-copper respiratory oxidase family. In terms of assembly, the cytochrome bo(3) ubiquinol oxidase complex is a heterooctamer of two A chains, two B chains, two C chains and two D chains. Requires Cu(2+) as cofactor. The cofactor is heme b. Fe(II)-heme o is required as a cofactor.

It localises to the cell membrane. It carries out the reaction 2 a ubiquinol + O2 + n H(+)(in) = 2 a ubiquinone + 2 H2O + n H(+)(out). Functionally, cytochrome bo(3) ubiquinol oxidase is the terminal enzyme in the aerobic respiratory chain. Catalyzes the four-electron reduction of O2 to water, using a ubiquinol as a membrane soluble electron donor for molecular oxygen reduction. Has proton pump activity across the membrane in addition to electron transfer, pumping 2 protons/electron and generating a proton motive force. All the redox centers of this enzyme complex are located within the largest subunit, subunit I. Protons are probably pumped via D- and K- channels found in this subunit. The chain is Cytochrome bo(3) ubiquinol oxidase subunit 1 (cyoB) from Buchnera aphidicola subsp. Baizongia pistaciae (strain Bp).